The sequence spans 28 residues: Flagellar filament 34 kDa core protein (28 aa).

It belongs to the bacterial flagellin family. The flagellum consists of an outer layer composed of repeating units of FlaA around a core that contains several antigenically related polypeptides.

The protein resides in the periplasmic flagellum. It is found in the periplasm. Component of the core of the flagella. The chain is Flagellar filament 34 kDa core protein from Treponema phagedenis.